The sequence spans 146 residues: Prefoldin subunit alpha (146 aa).

The protein belongs to the prefoldin alpha subunit family. Heterohexamer of two alpha and four beta subunits.

The protein resides in the cytoplasm. In terms of biological role, molecular chaperone capable of stabilizing a range of proteins. Seems to fulfill an ATP-independent, HSP70-like function in archaeal de novo protein folding. In Methanobrevibacter smithii (strain ATCC 35061 / DSM 861 / OCM 144 / PS), this protein is Prefoldin subunit alpha.